The sequence spans 216 residues: GTP cyclohydrolase 1 (216 aa).

The tract at residues 1-33 (MPQARGEGATPPTSLPNPSLKGVPLPDNPNNLE) is disordered. Over residues 24 to 33 (PLPDNPNNLE) the composition is skewed to low complexity. Zn(2+) is bound by residues cysteine 102, histidine 105, and cysteine 173.

This sequence belongs to the GTP cyclohydrolase I family. In terms of assembly, toroid-shaped homodecamer, composed of two pentamers of five dimers.

The catalysed reaction is GTP + H2O = 7,8-dihydroneopterin 3'-triphosphate + formate + H(+). It functions in the pathway cofactor biosynthesis; 7,8-dihydroneopterin triphosphate biosynthesis; 7,8-dihydroneopterin triphosphate from GTP: step 1/1. This chain is GTP cyclohydrolase 1 (folE), found in Deinococcus radiodurans (strain ATCC 13939 / DSM 20539 / JCM 16871 / CCUG 27074 / LMG 4051 / NBRC 15346 / NCIMB 9279 / VKM B-1422 / R1).